A 411-amino-acid chain; its full sequence is Dual-specificity RNA methyltransferase RlmN (411 aa).

The active-site Proton acceptor is the Glu125. The region spanning 131 to 380 (EEGRGTLCIS…IRTPRGRDIL (250 aa)) is the Radical SAM core domain. A disulfide bridge links Cys138 with Cys383. Positions 145, 149, and 152 each coordinate [4Fe-4S] cluster. S-adenosyl-L-methionine contacts are provided by residues 209-210 (GE), Ser241, 263-265 (SLH), and Asn340. The S-methylcysteine intermediate role is filled by Cys383.

This sequence belongs to the radical SAM superfamily. RlmN family. The cofactor is [4Fe-4S] cluster.

Its subcellular location is the cytoplasm. It carries out the reaction adenosine(2503) in 23S rRNA + 2 reduced [2Fe-2S]-[ferredoxin] + 2 S-adenosyl-L-methionine = 2-methyladenosine(2503) in 23S rRNA + 5'-deoxyadenosine + L-methionine + 2 oxidized [2Fe-2S]-[ferredoxin] + S-adenosyl-L-homocysteine. The catalysed reaction is adenosine(37) in tRNA + 2 reduced [2Fe-2S]-[ferredoxin] + 2 S-adenosyl-L-methionine = 2-methyladenosine(37) in tRNA + 5'-deoxyadenosine + L-methionine + 2 oxidized [2Fe-2S]-[ferredoxin] + S-adenosyl-L-homocysteine. Its function is as follows. Specifically methylates position 2 of adenine 2503 in 23S rRNA and position 2 of adenine 37 in tRNAs. m2A2503 modification seems to play a crucial role in the proofreading step occurring at the peptidyl transferase center and thus would serve to optimize ribosomal fidelity. The polypeptide is Dual-specificity RNA methyltransferase RlmN (Brucella canis (strain ATCC 23365 / NCTC 10854 / RM-666)).